A 553-amino-acid chain; its full sequence is ATP synthase subunit alpha (553 aa).

ATP is bound at residue 173-180 (GDRQTGKT). The disordered stretch occupies residues 527 to 553 (EALDPSAVEREEIAVHHRKPSDETAGH). Positions 533 to 553 (AVEREEIAVHHRKPSDETAGH) are enriched in basic and acidic residues.

It belongs to the ATPase alpha/beta chains family. F-type ATPases have 2 components, CF(1) - the catalytic core - and CF(0) - the membrane proton channel. CF(1) has five subunits: alpha(3), beta(3), gamma(1), delta(1), epsilon(1). CF(0) has three main subunits: a(1), b(2) and c(9-12). The alpha and beta chains form an alternating ring which encloses part of the gamma chain. CF(1) is attached to CF(0) by a central stalk formed by the gamma and epsilon chains, while a peripheral stalk is formed by the delta and b chains.

The protein localises to the cell membrane. The enzyme catalyses ATP + H2O + 4 H(+)(in) = ADP + phosphate + 5 H(+)(out). Functionally, produces ATP from ADP in the presence of a proton gradient across the membrane. The alpha chain is a regulatory subunit. This chain is ATP synthase subunit alpha, found in Parafrankia sp. (strain EAN1pec).